Here is a 277-residue protein sequence, read N- to C-terminus: 3-methyl-2-oxobutanoate hydroxymethyltransferase (277 aa).

2 residues coordinate Mg(2+): Asp53 and Asp96. 3-methyl-2-oxobutanoate contacts are provided by residues 53-54 (DS), Asp96, and Lys126. Glu128 is a Mg(2+) binding site. Glu195 (proton acceptor) is an active-site residue.

It belongs to the PanB family. In terms of assembly, homodecamer; pentamer of dimers. Mg(2+) serves as cofactor.

The protein resides in the cytoplasm. The catalysed reaction is 3-methyl-2-oxobutanoate + (6R)-5,10-methylene-5,6,7,8-tetrahydrofolate + H2O = 2-dehydropantoate + (6S)-5,6,7,8-tetrahydrofolate. It functions in the pathway cofactor biosynthesis; (R)-pantothenate biosynthesis; (R)-pantoate from 3-methyl-2-oxobutanoate: step 1/2. Functionally, catalyzes the reversible reaction in which hydroxymethyl group from 5,10-methylenetetrahydrofolate is transferred onto alpha-ketoisovalerate to form ketopantoate. In Chlorobium phaeobacteroides (strain DSM 266 / SMG 266 / 2430), this protein is 3-methyl-2-oxobutanoate hydroxymethyltransferase.